Consider the following 894-residue polypeptide: Protein SEY1 (894 aa).

Positions 1–64 (MGLDVDSVPI…PRALEPAQVT (64 aa)) are disordered. The Cytoplasmic segment spans residues 1–768 (MGLDVDSVPI…KRGTVSSMSQ (768 aa)). Residues 9–24 (PIAEAAAPSSMAATEP) are compositionally biased toward low complexity. Residues 40 to 53 (APMNTDSSRETMPT) show a composition bias toward polar residues. In terms of domain architecture, GB1/RHD3-type G spans 137–359 (GFGYDICAVL…DESYVFKTEY (223 aa)). 147–154 (GSQSTGKS) contacts GTP. A coiled-coil region spans residues 536 to 559 (KVDDERAQLLDELHTLARTLRANE). Residues 769 to 789 (VPIWMYGVLVVLGWNEAMAVL) form a helical membrane-spanning segment. Residues 790 to 792 (RNP) lie on the Lumenal side of the membrane. Residues 793–813 (VYFTLLCMVLATAYVIWRLNL) form a helical membrane-spanning segment. Residues 814–894 (GTPVLALASG…DSHPRLPASF (81 aa)) are Cytoplasmic-facing. Positions 841-894 (DGTPPSANRAREYRVPSGSTAHVSEKTPHRPLTTSGAAEADTVEDSHPRLPASF) are disordered.

This sequence belongs to the TRAFAC class dynamin-like GTPase superfamily. GB1/RHD3 GTPase family. RHD3 subfamily.

It localises to the endoplasmic reticulum membrane. In terms of biological role, cooperates with the reticulon proteins and tubule-shaping DP1 family proteins to generate and maintain the structure of the tubular endoplasmic reticulum network. Has GTPase activity, which is required for its function in ER organization. The chain is Protein SEY1 from Malassezia globosa (strain ATCC MYA-4612 / CBS 7966) (Dandruff-associated fungus).